A 360-amino-acid polypeptide reads, in one-letter code: WD repeat domain phosphoinositide-interacting protein 4 (360 aa).

7 WD repeats span residues Met-1 to Val-34, Lys-40 to Asp-84, Lys-92 to Phe-128, Arg-133 to Leu-174, Ser-183 to Thr-222, Lys-227 to Leu-266, and Gly-284 to Asp-329. Residues Leu-231–Gly-234 carry the L/FRRG motif motif.

Belongs to the WD repeat PROPPIN family. Interacts with WIPI1. Interacts with WIPI2. Interacts with ATG2A and ATG2B. Interacts with ULK1. May interact with the PRKAA1, PRKAA2, PRKAB1 and PRKAG1 subunits of the AMPK kinase. May interact with NUDC. Ubiquitously expressed, with high expression in skeletal muscle and heart. Weakly expressed in liver and placenta. Expression is down-regulated in pancreatic and in kidney tumors.

The protein resides in the preautophagosomal structure. It localises to the cytoplasm. Activated upon amino-acid starvation. Component of the autophagy machinery that controls the major intracellular degradation process by which cytoplasmic materials are packaged into autophagosomes and delivered to lysosomes for degradation. Binds phosphatidylinositol 3-phosphate (PtdIns3P). Activated by the STK11/AMPK signaling pathway upon starvation, WDR45 is involved in autophagosome assembly downstream of WIPI2, regulating the size of forming autophagosomes. Together with WIPI1, promotes ATG2 (ATG2A or ATG2B)-mediated lipid transfer by enhancing ATG2-association with phosphatidylinositol 3-monophosphate (PI3P)-containing membranes. Probably recruited to membranes through its PtdIns3P activity. In Homo sapiens (Human), this protein is WD repeat domain phosphoinositide-interacting protein 4 (WDR45).